A 176-amino-acid chain; its full sequence is 2-C-methyl-D-erythritol 2,4-cyclodiphosphate synthase (176 aa).

3 residues coordinate a divalent metal cation: Asp-23, His-25, and His-60. 23 to 25 (DSH) contributes to the 4-CDP-2-C-methyl-D-erythritol 2-phosphate binding site. 149–152 (TSGE) provides a ligand contact to 4-CDP-2-C-methyl-D-erythritol 2-phosphate.

Belongs to the IspF family. As to quaternary structure, homotrimer. The cofactor is a divalent metal cation.

It catalyses the reaction 4-CDP-2-C-methyl-D-erythritol 2-phosphate = 2-C-methyl-D-erythritol 2,4-cyclic diphosphate + CMP. The protein operates within isoprenoid biosynthesis; isopentenyl diphosphate biosynthesis via DXP pathway; isopentenyl diphosphate from 1-deoxy-D-xylulose 5-phosphate: step 4/6. In terms of biological role, involved in the biosynthesis of isopentenyl diphosphate (IPP) and dimethylallyl diphosphate (DMAPP), two major building blocks of isoprenoid compounds. Catalyzes the conversion of 4-diphosphocytidyl-2-C-methyl-D-erythritol 2-phosphate (CDP-ME2P) to 2-C-methyl-D-erythritol 2,4-cyclodiphosphate (ME-CPP) with a corresponding release of cytidine 5-monophosphate (CMP). The sequence is that of 2-C-methyl-D-erythritol 2,4-cyclodiphosphate synthase from Chlamydia caviae (strain ATCC VR-813 / DSM 19441 / 03DC25 / GPIC) (Chlamydophila caviae).